The chain runs to 215 residues: Deoxyribose-phosphate aldolase (215 aa).

Residue Asp-90 is the Proton donor/acceptor of the active site. Residue Lys-152 is the Schiff-base intermediate with acetaldehyde of the active site. The active-site Proton donor/acceptor is Lys-181.

This sequence belongs to the DeoC/FbaB aldolase family. DeoC type 1 subfamily.

It is found in the cytoplasm. It catalyses the reaction 2-deoxy-D-ribose 5-phosphate = D-glyceraldehyde 3-phosphate + acetaldehyde. It participates in carbohydrate degradation; 2-deoxy-D-ribose 1-phosphate degradation; D-glyceraldehyde 3-phosphate and acetaldehyde from 2-deoxy-alpha-D-ribose 1-phosphate: step 2/2. Catalyzes a reversible aldol reaction between acetaldehyde and D-glyceraldehyde 3-phosphate to generate 2-deoxy-D-ribose 5-phosphate. This Ureaplasma urealyticum serovar 10 (strain ATCC 33699 / Western) protein is Deoxyribose-phosphate aldolase.